A 328-amino-acid chain; its full sequence is Phosphate acyltransferase (328 aa).

The protein belongs to the PlsX family. In terms of assembly, homodimer. Probably interacts with PlsY.

The protein resides in the cytoplasm. The enzyme catalyses a fatty acyl-[ACP] + phosphate = an acyl phosphate + holo-[ACP]. The protein operates within lipid metabolism; phospholipid metabolism. Catalyzes the reversible formation of acyl-phosphate (acyl-PO(4)) from acyl-[acyl-carrier-protein] (acyl-ACP). This enzyme utilizes acyl-ACP as fatty acyl donor, but not acyl-CoA. The chain is Phosphate acyltransferase from Staphylococcus aureus (strain MRSA252).